Reading from the N-terminus, the 433-residue chain is Probable mannan endo-1,4-beta-mannosidase F (433 aa).

The signal sequence occupies residues 1-19 (MKRQALTLIPLLGAAAAQS). Residues 20–53 (GPYGQCGGNDWSGATTCVSGYVCVYQNEWYSQCV) form the CBM1 domain. The segment at 56-82 (TATSSSTTLTTTTSATTRTTTTTTSTT) is thr-rich linker. The segment at 83–433 (SVPSSTNFPS…TEHMERIAAR (351 aa)) is catalytic. Asn-97 carries an N-linked (GlcNAc...) asparagine glycan. 2 residues coordinate substrate: Trp-142 and Asn-255. Glu-256 (proton donor) is an active-site residue. Residue Tyr-331 participates in substrate binding. Glu-364 (nucleophile) is an active-site residue. Residue Trp-394 coordinates substrate.

Belongs to the glycosyl hydrolase 5 (cellulase A) family.

The protein resides in the secreted. The catalysed reaction is Random hydrolysis of (1-&gt;4)-beta-D-mannosidic linkages in mannans, galactomannans and glucomannans.. Endo-1,4-mannanase, a crucial enzyme for depolymerization of seed galactomannans and wood galactoglucomannans. The polypeptide is Probable mannan endo-1,4-beta-mannosidase F (manF) (Emericella nidulans (strain FGSC A4 / ATCC 38163 / CBS 112.46 / NRRL 194 / M139) (Aspergillus nidulans)).